Reading from the N-terminus, the 247-residue chain is Sensory rhodopsin-1 (247 aa).

The Extracellular segment spans residues 1–4; sequence MTGA. The chain crosses the membrane as a helical span at residues 5–26; the sequence is VSAAYWIAAVAFLVGLGITAAL. The Cytoplasmic portion of the chain corresponds to 27–35; that stretch reads YAKLGESED. A helical transmembrane segment spans residues 36–57; the sequence is RGRLAALAVIPGFAGLAYAGMA. Topologically, residues 58-71 are extracellular; that stretch reads LGIGTVTVNGAELV. A helical transmembrane segment spans residues 72-93; the sequence is GLRYVDWIVTTPLLVGFIGYVA. Residues 94–96 lie on the Cytoplasmic side of the membrane; it reads GAS. The chain crosses the membrane as a helical span at residues 97-119; it reads RRAIAGVMLADALMIAFGAGAVV. Topologically, residues 120–123 are extracellular; the sequence is TGGT. Residues 124 to 151 form a helical membrane-spanning segment; that stretch reads LKWVLFGVSSIFHVTLFAYLYVVFPRAV. Residues 152–154 are Cytoplasmic-facing; the sequence is PDD. A helical transmembrane segment spans residues 155–182; it reads PMQRGLFSLLKNHVGLLWLAYPFVWLMG. Topologically, residues 183-190 are extracellular; that stretch reads PAGIGFTT. The chain crosses the membrane as a helical span at residues 191–223; it reads GVGAALTYAFLDVLAKVPYVYFFYARRQAFTDV. The residue at position 206 (Lys-206) is an N6-(retinylidene)lysine. Residues 224-247 lie on the Cytoplasmic side of the membrane; sequence VSAATADREDATDAVGDGAPTAAD.

The protein belongs to the archaeal/bacterial/fungal opsin family. Interacts with HTR-I.

The protein localises to the cell membrane. Its function is as follows. Involved in the control of phototaxis. Mediates both photoattractant (in the orange light) and photophobic (in the near UV light) responses. The signal is then transmitted to the sensory rhodopsin I transducer (HTR-I). This Halobacterium sp. (strain SG1) protein is Sensory rhodopsin-1 (sop1).